A 170-amino-acid polypeptide reads, in one-letter code: Transmembrane protein 217B (170 aa).

Positions 1 to 21 are cleaved as a signal peptide; it reads MNVRMFSLMVGIFSVLNTTQF. Topologically, residues 22 to 58 are lumenal; sequence FIFDLNQKTHICYEAKFSIYVDSKSELVTWTLFHRAN. A helical transmembrane segment spans residues 59 to 79; it reads ISTGLSLTTIIIGCFLFYCIH. The Cytoplasmic portion of the chain corresponds to 80–85; sequence KNIYMG. A helical transmembrane segment spans residues 86–106; sequence LLIYAMWIITYELINFSIVLL. The Lumenal segment spans residues 107 to 120; that stretch reads LNGIIKDHFKTLSY. A helical membrane pass occupies residues 121-141; that stretch reads LHWIFQISHMLLHFFCLPFIV. Residues 142 to 170 are Cytoplasmic-facing; that stretch reads KHAYNLYKESQTVGRKRRHRLCSTIAVNS.

The protein localises to the membrane. This is Transmembrane protein 217B from Homo sapiens (Human).